The primary structure comprises 109 residues: Large ribosomal subunit protein uL22 (109 aa).

This sequence belongs to the universal ribosomal protein uL22 family. In terms of assembly, part of the 50S ribosomal subunit.

Its function is as follows. This protein binds specifically to 23S rRNA; its binding is stimulated by other ribosomal proteins, e.g. L4, L17, and L20. It is important during the early stages of 50S assembly. It makes multiple contacts with different domains of the 23S rRNA in the assembled 50S subunit and ribosome. The globular domain of the protein is located near the polypeptide exit tunnel on the outside of the subunit, while an extended beta-hairpin is found that lines the wall of the exit tunnel in the center of the 70S ribosome. This is Large ribosomal subunit protein uL22 from Bordetella avium (strain 197N).